Reading from the N-terminus, the 457-residue chain is UDP-N-acetylmuramoyl-tripeptide--D-alanyl-D-alanine ligase (457 aa).

Residue 109–115 (GSSGKTT) coordinates ATP.

The protein belongs to the MurCDEF family. MurF subfamily.

It is found in the cytoplasm. The catalysed reaction is D-alanyl-D-alanine + UDP-N-acetyl-alpha-D-muramoyl-L-alanyl-gamma-D-glutamyl-meso-2,6-diaminopimelate + ATP = UDP-N-acetyl-alpha-D-muramoyl-L-alanyl-gamma-D-glutamyl-meso-2,6-diaminopimeloyl-D-alanyl-D-alanine + ADP + phosphate + H(+). Its pathway is cell wall biogenesis; peptidoglycan biosynthesis. Involved in cell wall formation. Catalyzes the final step in the synthesis of UDP-N-acetylmuramoyl-pentapeptide, the precursor of murein. This is UDP-N-acetylmuramoyl-tripeptide--D-alanyl-D-alanine ligase from Haemophilus influenzae (strain ATCC 51907 / DSM 11121 / KW20 / Rd).